Reading from the N-terminus, the 412-residue chain is Indian hedgehog B protein (412 aa).

Positions 1 to 23 are cleaved as a signal peptide; the sequence is MRLSTAAALLTGFILAFSPAYDG. A lipid anchor (N-palmitoyl cysteine) is attached at cysteine 24. Ca(2+) contacts are provided by glutamate 89, glutamate 90, aspartate 95, threonine 125, glutamate 126, aspartate 129, and aspartate 131. The Zn(2+) site is built by histidine 140, aspartate 147, and histidine 182. Glycine 197 is lipidated: Cholesterol glycine ester.

This sequence belongs to the hedgehog family. Multimer. As to quaternary structure, interacts with BOC and CDON. Interacts with PTCH1. Interacts with glypican GPC3. Cholesterylation is required for N-product targeting to lipid rafts and multimerization. Post-translationally, the C-terminal domain displays an autoproteolysis activity and a cholesterol transferase activity. Both activities result in the cleavage of the full-length protein and covalent attachment of a cholesterol moiety to the C-terminal of the newly generated N-product. The N-product is the active species in both local and long-range signaling, whereas the C-product is degraded in the endoplasmic reticulum. In terms of processing, N-palmitoylation by HHAT of N-product is required for indian hedgehog protein N-product multimerization and full activity. In terms of tissue distribution, expressed exclusively in the notochord.

Its subcellular location is the cell membrane. The protein resides in the endoplasmic reticulum membrane. The protein localises to the golgi apparatus membrane. It localises to the secreted. It carries out the reaction glycyl-L-cysteinyl-[protein] + cholesterol + H(+) = [protein]-C-terminal glycyl cholesterol ester + N-terminal L-cysteinyl-[protein]. Its function is as follows. Signal involved in the early induction and patterning of anterodorsal ectoderm, nervous system and somites. It is involved in the regulation of endochondral skeleton formation, and the development of retinal pigment epithelium (RPE), photoreceptors and periocular tissues. In terms of biological role, the C-terminal part of the indian hedgehog protein precursor displays an autoproteolysis and a cholesterol transferase activity. Both activities result in the cleavage of the full-length protein into two parts followed by the covalent attachment of a cholesterol moiety to the C-terminal of the newly generated N-product. Both activities occur in the endoplasmic reticulum. The dually lipidated indian hedgehog protein N-product is a morphogen which is essential for a variety of patterning events during development. Binds to the patched (PTCH1) receptor, which functions in association with smoothened (SMO), to activate the transcription of target genes. In the notochord, induces somite patterning and muscle pioneer differentiation. This chain is Indian hedgehog B protein (ihhb), found in Danio rerio (Zebrafish).